The primary structure comprises 1180 residues: uncharacterized protein (1180 aa).

7 disordered regions span residues 229–280 (RQQG…DTSI), 431–465 (KQPPKEKAHRRGAPHPESEPESSEESTPVWRPPLK), 484–575 (SRDT…PNMR), 730–758 (GRPLRETHHNDQDPEPRSMTLDSPRASRT), 810–986 (GKAE…ASWD), 1045–1109 (RLQE…ELEM), and 1125–1152 (ERLEYQRRKQEAEEKARLEAEERRQKEE). The segment covering 269 to 279 (QEDETQAEDTS) has biased composition (acidic residues). The segment covering 431–443 (KQPPKEKAHRRGA) has biased composition (basic residues). Residues 486–497 (DTLSPQGSSSLP) are compositionally biased toward polar residues. The span at 509–518 (SKARHTRVHS) shows a compositional bias: basic residues. 3 stretches are compositionally biased toward basic and acidic residues: residues 730–745 (GRPLRETHHNDQDPEP), 826–837 (SHERDLINEAKR), and 846–856 (TKGPKSEREGK). Over residues 872–889 (KAKKKLEKKTRPQRKRTQ) the composition is skewed to basic residues. Polar residues predominate over residues 937-959 (QESQVSLDGRSSPSQIATVTGNM). Basic and acidic residues-rich tracts occupy residues 960 to 986 (ESKEERRCEDPSKALLTKREQEKASWD), 1045 to 1106 (RLQE…RQEE), and 1127 to 1152 (LEYQRRKQEAEEKARLEAEERRQKEE). Residues 988-1171 (LRAERAEMRW…ATKQAQEQAR (184 aa)) adopt a coiled-coil conformation.

This is an uncharacterized protein from Homo sapiens (Human).